Reading from the N-terminus, the 206-residue chain is Transcription elongation factor A protein-like 5 (206 aa).

Residues 1-26 (MEKLYKENEGKPENERNLESEGKPED) show a composition bias toward basic and acidic residues. The segment at 1–206 (MEKLYKENEG…QKDLEDVPYV (206 aa)) is disordered. Acidic residues predominate over residues 27–42 (EGSTEDEGKSDEEEKP). The span at 43-56 (DMEGKTECEGKRED) shows a compositional bias: basic and acidic residues. Positions 57–70 (EGEPGDEGQLEDEG) are enriched in acidic residues. Composition is skewed to basic and acidic residues over residues 71–86 (NQEKQGKSEGEDKPQS), 102–113 (AAEKRPAEDYVP), 121–160 (DRGTDDSPKDSQEDLQERHLSSEEMMRECGDVSRAQEELR), and 196–206 (GQKDLEDVPYV).

This sequence belongs to the TFS-II family. TFA subfamily.

It localises to the nucleus. In terms of biological role, may be involved in transcriptional regulation. The protein is Transcription elongation factor A protein-like 5 (TCEAL5) of Homo sapiens (Human).